Reading from the N-terminus, the 134-residue chain is Transmembrane protein 100 (134 aa).

Positions 1 to 23 are disordered; that stretch reads MTEESTKENLGAPKSPTPVTMEK. S15 carries the post-translational modification Phosphoserine. The next 2 helical transmembrane spans lie at 56–76 and 84–104; these read CIIP…AVAY and IISI…ASSA. A Phosphoserine modification is found at S121.

As to quaternary structure, interacts (via C-terminus) with TRPA1 and TRPV1. Interacts with TASOR. In terms of tissue distribution, expressed in dorsal root ganglia. Expressed in neurons as well as nerve fiber bundles connecting ganglia and fibers innervating muscle layer of the gastric body, jejunum, and proximal colon. Expressed in arterial endothelial cells and neurons of the central nervous system and peripheral nervous system (at protein level). Expressed strongly in lung, weakly in brain, heart and muscle. Expressed in enteric neurons and vascular tissue in the muscularis propria of the gastrointestinal tract.

The protein localises to the cell membrane. Its subcellular location is the membrane. It localises to the perikaryon. It is found in the cytoplasm. The protein resides in the perinuclear region. The protein localises to the endoplasmic reticulum. Functionally, plays a role during embryonic arterial endothelium differentiation and vascular morphogenesis through the ACVRL1 receptor-dependent signaling pathway upon stimulation by bone morphogenetic proteins, such as GDF2/BMP9 and BMP10. Involved in the regulation of nociception, acting as a modulator of the interaction between TRPA1 and TRPV1, two molecular sensors and mediators of pain signals in dorsal root ganglia (DRG) neurons. Mechanistically, it weakens their interaction, thereby releasing the inhibition of TRPA1 by TRPV1 and increasing the single-channel open probability of the TRPA1-TRPV1 complex. The chain is Transmembrane protein 100 (Tmem100) from Mus musculus (Mouse).